The sequence spans 89 residues: Co-chaperonin GroES (89 aa).

It belongs to the GroES chaperonin family. In terms of assembly, heptamer of 7 subunits arranged in a ring. Interacts with the chaperonin GroEL.

It is found in the cytoplasm. In terms of biological role, together with the chaperonin GroEL, plays an essential role in assisting protein folding. The GroEL-GroES system forms a nano-cage that allows encapsulation of the non-native substrate proteins and provides a physical environment optimized to promote and accelerate protein folding. GroES binds to the apical surface of the GroEL ring, thereby capping the opening of the GroEL channel. The sequence is that of Co-chaperonin GroES from Wolinella succinogenes (strain ATCC 29543 / DSM 1740 / CCUG 13145 / JCM 31913 / LMG 7466 / NCTC 11488 / FDC 602W) (Vibrio succinogenes).